A 394-amino-acid chain; its full sequence is tRNA-specific adenosine deaminase 1 (394 aa).

One can recognise an A to I editase domain in the interval 54 to 388 (SLGCGTKCIG…TKKPHELLDF (335 aa)). His78 is a Zn(2+) binding site. Glu80 (proton donor) is an active-site residue. 2 residues coordinate 1D-myo-inositol hexakisphosphate: Arg84 and Arg85. Cys127 and Cys191 together coordinate Zn(2+). Residues Lys194, Arg197, Lys320, Lys357, and Lys381 each contribute to the 1D-myo-inositol hexakisphosphate site.

This sequence belongs to the ADAT1 family. Requires 1D-myo-inositol hexakisphosphate as cofactor. In terms of tissue distribution, widely expressed in early embryos, and later concentrates in the central nervous system.

The enzyme catalyses adenosine(37) in tRNA(Ala) + H2O + H(+) = inosine(37) in tRNA(Ala) + NH4(+). Specifically deaminates adenosine-37 to inosine in tRNA-Ala. In Drosophila melanogaster (Fruit fly), this protein is tRNA-specific adenosine deaminase 1.